Reading from the N-terminus, the 299-residue chain is UPF0282 protein TK1681 (299 aa).

This sequence belongs to the UPF0282 family.

The sequence is that of UPF0282 protein TK1681 from Thermococcus kodakarensis (strain ATCC BAA-918 / JCM 12380 / KOD1) (Pyrococcus kodakaraensis (strain KOD1)).